Consider the following 92-residue polypeptide: MIQRDIEYSGQFSKDVKLAQKRHKDMNKLKYLMTLLINNTLPLPAVYKDHPLQSSWKGYRDAHVEPDWILIYKLTDKLLRFERTGTHAALFG.

His-87 functions as the Proton donor in the catalytic mechanism.

It belongs to the RelE toxin family. YafQ subfamily. In terms of assembly, monomer in solution, forms a heterotetramer with antitoxin DinJ, with 2 YafQ-DinJ dimers associated via the N-terminus of the DinJ antitoxins (YafQ-(DinJ)2-YafQ).

In terms of biological role, toxic component of a type II toxin-antitoxin (TA) system. A sequence-specific mRNA endoribonuclease that inhibits translation elongation and induces bacterial stasis. Cleavage occurs between the second and third residue of the Lys codon followed by a G or A (5'AAA(G/A)3'), is reading-frame dependent and occurs within the 5' end of most mRNAs. Ribosome-binding confers the sequence specificity and reading frame-dependence. The YafQ-DinJ heterotetramer binds the consensus sequence 5'-TTTGAGCTACA-3' in the dinJ promoter; DinJ also binds DNA but not as well as the YafQ-DinJ complex. In Escherichia coli (strain B / BL21-DE3), this protein is mRNA interferase toxin YafQ (yafQ).